The sequence spans 601 residues: Glutathione-regulated potassium-efflux system protein KefB (601 aa).

Transmembrane regions (helical) follow at residues 4 to 24, 29 to 49, 55 to 75, 87 to 107, 111 to 131, 152 to 172, 177 to 197, 207 to 227, 230 to 250, 262 to 282, 284 to 304, 324 to 344, and 356 to 376; these read ADLL…VPLA, IGAV…GLGF, EILH…GLEL, IFGV…GLLM, FLWQ…TAMA, VLLF…LLAG, HFDW…LIGG, FIAA…LVLS, LFMD…GVLL, AIDP…GMSL, LGVL…LVVI, MQFA…FSTA, and ALLL…MKGI. The 120-residue stretch at 400–519 folds into the RCK N-terminal domain; that stretch reads KPQVIVVGFG…AGVTQFSRET (120 aa).

It belongs to the monovalent cation:proton antiporter 2 (CPA2) transporter (TC 2.A.37) family. KefB subfamily. As to quaternary structure, interacts with the regulatory subunit KefG.

It is found in the cell inner membrane. Functionally, pore-forming subunit of a potassium efflux system that confers protection against electrophiles. Catalyzes K(+)/H(+) antiport. This chain is Glutathione-regulated potassium-efflux system protein KefB, found in Salmonella dublin (strain CT_02021853).